A 468-amino-acid polypeptide reads, in one-letter code: MFGFRLFILAAVALAYIQCAAARMTVAHRLGARSLPTPENDPFYTPDDGWESAAPGTILKKREITVANSGVFQYGVRGFQLLYRTSGVNRGDASHTVTTVIIPENYDKDKLVSANMYEDSYSSNCAPSYSMRKGSKVFNDLANSYQMLFITTLLHEGWAVTVPDHEGPNNAFTSGRVEGHAILDGIRATLNYKKLGLNSDAKVIGYGYSGGALATGWAASLHSQYAHELNVAGWSMGGTVSNVTEWLGYIDNTTGAGFALASLGGLSSSYSELAWVQDNLTSKGRRLLDQSAQNCMYQNLWAVGKQKILDDSVFAGGSTFLQNDGALNILNKLTLGRFSKFVPIAPVFMFHATHDEVVPFNMAITTADAWCAQGAQIKFLSNTGSEMEHTNTELFNLPNVIFFMRDRFKGKDFGGQCQYPSSNDPWFNPQILGTSAAIYLQQVLDLIGNRIGGHDSILWDKVHSKQQP.

The first 22 residues, 1–22 (MFGFRLFILAAVALAYIQCAAA), serve as a signal peptide directing secretion. A disulfide bridge connects residues Cys-125 and Cys-295. Ser-209 serves as the catalytic Nucleophile. N-linked (GlcNAc...) asparagine glycosylation is found at Asn-242, Asn-252, and Asn-279. Active-site residues include Asp-355 and His-389.

It belongs to the AB hydrolase superfamily. Lipase family. Class Lip subfamily.

Its subcellular location is the secreted. It carries out the reaction a triacylglycerol + H2O = a diacylglycerol + a fatty acid + H(+). The enzyme catalyses a monoacylglycerol + H2O = glycerol + a fatty acid + H(+). The catalysed reaction is a diacylglycerol + H2O = a monoacylglycerol + a fatty acid + H(+). In terms of biological role, secreted lipase that hydrolyzes acylglycerol lipids such as triacylglycerols and consequently releases free fatty acid. Due to an absence of fatty acid synthase genes in Malassezia species, secretory lipases are essential for the yeast to generate free fatty acids from degradation of sebum and assimilate them as lipid sources for growth. Plays important roles not only in lipid metabolism but also in the immune response of host cells and pathogenesis. This Malassezia furfur (Pityriasis versicolor infection agent) protein is Secreted triacylglycerol lipase LIP2.